Reading from the N-terminus, the 779-residue chain is Chloride channel protein CLC-c (779 aa).

A Phosphoserine modification is found at serine 27. The next 12 membrane-spanning stretches (helical) occupy residues 92–112 (TFLK…VGFL), 142–162 (FAFA…CAFI), 190–210 (STLF…FVVG), 215–235 (MVHT…KKYR), 257–277 (GAAA…LFAL), 287–307 (ALLW…RSLI), 341–361 (LAIV…NYLV), 380–400 (IMLV…LPWL), 466–486 (LAIF…IAIP), 488–508 (GLFI…GRLL), 520–540 (SLLG…SLCV), and 541–561 (ILLE…VLLI). One can recognise a CBS 1 domain in the interval 601–659 (DVVSGALISFSRVEKVGVIWQALKMTRHNGFPVIDEPPFTEASELCGIALRSHLLVLLQ). Phosphoserine is present on serine 672. The 65-residue stretch at 713-777 (ITNTSPYTVL…VLGLYPHIDP (65 aa)) folds into the CBS 2 domain. Residues 741-761 (HLCVVPKTPGRPPIVGILTRH) traverse the membrane as a helical segment.

This sequence belongs to the chloride channel (TC 2.A.49) family. As to quaternary structure, homodimer. Interacts with PP2A5. In terms of tissue distribution, broadly expressed in the plant.

The protein resides in the membrane. Its function is as follows. Voltage-gated chloride channel. In Arabidopsis thaliana (Mouse-ear cress), this protein is Chloride channel protein CLC-c (CLC-C).